The chain runs to 700 residues: Elongation factor G (700 aa).

One can recognise a tr-type G domain in the interval 8 to 290 (DRYRNVGIMA…AMIMYMPSPL (283 aa)). GTP is bound by residues 17–24 (AHIDAGKT), 88–92 (DTPGH), and 142–145 (NKMD).

This sequence belongs to the TRAFAC class translation factor GTPase superfamily. Classic translation factor GTPase family. EF-G/EF-2 subfamily.

The protein resides in the cytoplasm. In terms of biological role, catalyzes the GTP-dependent ribosomal translocation step during translation elongation. During this step, the ribosome changes from the pre-translocational (PRE) to the post-translocational (POST) state as the newly formed A-site-bound peptidyl-tRNA and P-site-bound deacylated tRNA move to the P and E sites, respectively. Catalyzes the coordinated movement of the two tRNA molecules, the mRNA and conformational changes in the ribosome. The polypeptide is Elongation factor G (Vesicomyosocius okutanii subsp. Calyptogena okutanii (strain HA)).